The chain runs to 658 residues: Trimethylamine N-oxide transport system permease protein TmoV (658 aa).

The next 15 membrane-spanning stretches (helical) occupy residues 20–40 (LGLA…AGLL), 103–123 (IGPI…YYLG), 127–147 (MALL…WDIA), 153–173 (VLVV…ISAW), 185–205 (VLAV…VIFF), 212–232 (GAVA…TLGL), 273–293 (VIML…PGLG), 300–320 (MGSF…LLAV), 349–369 (FLLM…VVPI), 420–440 (FMLS…ALLV), 447–467 (VLAA…RSVI), 469–489 (LYSV…IGVV), 517–537 (IPAI…ILIF), 585–605 (AVGF…AAFI), and 627–647 (FVLG…IMKW). Residues 147 to 326 (AMQTMSVLVV…LLAVTLDRMS (180 aa)) form the ABC transmembrane type-1 1 domain. The region spanning 465–644 (SVITLYSVLA…LMALTFDMVI (180 aa)) is the ABC transmembrane type-1 2 domain.

It belongs to the binding-protein-dependent transport system permease family. The complex is probably composed of two ATP-binding proteins (TmoW), two transmembrane proteins (TmoV) and a solute-binding protein (TmoX).

It localises to the cell inner membrane. In terms of biological role, part of the ABC transporter complex TmoXWV involved in trimethylamine N-oxide (TMAO) import. Responsible for the translocation of the substrate across the membrane. Is specific for TMAO and essential for TMAO metabolism. This is Trimethylamine N-oxide transport system permease protein TmoV from Ruegeria pomeroyi (strain ATCC 700808 / DSM 15171 / DSS-3) (Silicibacter pomeroyi).